A 491-amino-acid chain; its full sequence is Protein OrfX3 (491 aa).

It belongs to the TULIP P47 family. As to quaternary structure, heterodimer of OrfX1 and OrfX3; crystallizes as a dimer of heterodimers.

Expression of the ptox operon (ntnh-orfX1-orfX2-orfX3-pmp1) in B.thuringiensis kills Anopheles but not Aedes mosquito 3rd instar larvae. The ntnh-pmp1 construct is about half as toxic. The sequence is that of Protein OrfX3 from Paraclostridium bifermentans (Clostridium bifermentans).